The following is a 129-amino-acid chain: Small ribosomal subunit protein uS11 (129 aa).

It belongs to the universal ribosomal protein uS11 family. As to quaternary structure, part of the 30S ribosomal subunit. Interacts with proteins S7 and S18. Binds to IF-3.

Located on the platform of the 30S subunit, it bridges several disparate RNA helices of the 16S rRNA. Forms part of the Shine-Dalgarno cleft in the 70S ribosome. This chain is Small ribosomal subunit protein uS11, found in Methylocella silvestris (strain DSM 15510 / CIP 108128 / LMG 27833 / NCIMB 13906 / BL2).